Here is a 137-residue protein sequence, read N- to C-terminus: Nucleoside diphosphate kinase (137 aa).

Positions 9, 57, 85, 91, 102, and 112 each coordinate ATP. The active-site Pros-phosphohistidine intermediate is H115.

The protein belongs to the NDK family. In terms of assembly, homotetramer. The cofactor is Mg(2+).

The protein localises to the cytoplasm. The catalysed reaction is a 2'-deoxyribonucleoside 5'-diphosphate + ATP = a 2'-deoxyribonucleoside 5'-triphosphate + ADP. It catalyses the reaction a ribonucleoside 5'-diphosphate + ATP = a ribonucleoside 5'-triphosphate + ADP. In terms of biological role, major role in the synthesis of nucleoside triphosphates other than ATP. The ATP gamma phosphate is transferred to the NDP beta phosphate via a ping-pong mechanism, using a phosphorylated active-site intermediate. This is Nucleoside diphosphate kinase from Leptospira interrogans serogroup Icterohaemorrhagiae serovar Lai (strain 56601).